The chain runs to 307 residues: Chaperone protein DnaJ 2 (307 aa).

A J domain is found at 6–71 (NYYQILGVPR…TKRRELDSRL (66 aa)). Residues 69-133 (SRLFGRFRRP…TRRTKVVSPA (65 aa)) form a disordered region. Polar residues predominate over residues 88 to 99 (NGGRSPNGTSVN). The span at 100-114 (GQVRTPTGRTGTRQP) shows a compositional bias: low complexity.

This sequence belongs to the DnaJ family. As to quaternary structure, homodimer. The cofactor is Zn(2+).

Its subcellular location is the cytoplasm. Functionally, participates actively in the response to hyperosmotic and heat shock by preventing the aggregation of stress-denatured proteins and by disaggregating proteins, also in an autonomous, DnaK-independent fashion. Unfolded proteins bind initially to DnaJ; upon interaction with the DnaJ-bound protein, DnaK hydrolyzes its bound ATP, resulting in the formation of a stable complex. GrpE releases ADP from DnaK; ATP binding to DnaK triggers the release of the substrate protein, thus completing the reaction cycle. Several rounds of ATP-dependent interactions between DnaJ, DnaK and GrpE are required for fully efficient folding. Also involved, together with DnaK and GrpE, in the DNA replication of plasmids through activation of initiation proteins. The sequence is that of Chaperone protein DnaJ 2 (dnaJ2) from Synechocystis sp. (strain ATCC 27184 / PCC 6803 / Kazusa).